The following is a 437-amino-acid chain: Protein disulfide-isomerase tmx3a (437 aa).

The first 21 residues, 1-21 (MANMRNIILTALLSAIALVSG), serve as a signal peptide directing secretion. The Thioredoxin domain occupies 22–126 (YVEGLDDKFT…IIEFTNRVSG (105 aa)). Topologically, residues 22–368 (YVEGLDDKFT…KNTVMSMVET (347 aa)) are extracellular. Residues Cys-48 and Cys-51 each act as nucleophile in the active site. The cysteines at positions 48 and 51 are disulfide-linked. Asn-308 carries N-linked (GlcNAc...) asparagine glycosylation. A helical transmembrane segment spans residues 369-389 (APVFSCFVLGLPVGVVVLVIY). Residues 390–437 (ATCTAVPADDEKPEEEATASPALDTHGKKAIESQPESTEKTSEAKKED) are Cytoplasmic-facing. The tract at residues 398–437 (DDEKPEEEATASPALDTHGKKAIESQPESTEKTSEAKKED) is disordered. A compositionally biased stretch (basic and acidic residues) spans 414 to 437 (THGKKAIESQPESTEKTSEAKKED). The Di-lysine motif motif lies at 434–437 (KKED).

The protein localises to the endoplasmic reticulum membrane. The catalysed reaction is Catalyzes the rearrangement of -S-S- bonds in proteins.. Its function is as follows. Probable disulfide isomerase, which participates in the folding of proteins containing disulfide bonds. May act as a dithiol oxidase. Acts as a regulator of endoplasmic reticulum-mitochondria contact sites via its ability to regulate redox signals. The polypeptide is Protein disulfide-isomerase tmx3a (tmx3a) (Danio rerio (Zebrafish)).